A 384-amino-acid polypeptide reads, in one-letter code: Sphingosine 1-phosphate receptor 4 (384 aa).

Residues 1 to 50 (MNATGTPVAPESCQQLAAGGHSRLIVLHYNHSGRLAGRGGPEDGGLGALR) are Extracellular-facing. N-linked (GlcNAc...) asparagine glycosylation is found at Asn-2 and Asn-30. The chain crosses the membrane as a helical span at residues 51-71 (GLSVAASCLVVLENLLVLAAI). Topologically, residues 72–84 (TSHMRSRRWVYYC) are cytoplasmic. Residues 85–105 (LVNITLSDLLTGAAYLANVLL) traverse the membrane as a helical segment. Residues 106–117 (SGARTFRLAPAQ) are Extracellular-facing. A helical membrane pass occupies residues 118–138 (WFLREGLLFTALAASTFSLLF). Topologically, residues 139-161 (TAGERFATMVRPVAESGATKTSR) are cytoplasmic. A helical transmembrane segment spans residues 162–182 (VYGFIGLCWLLAALLGMLPLL). The Extracellular portion of the chain corresponds to 183–206 (GWNCLCAFDRCSSLLPLYSKRYIL). Residues 207–227 (FCLVIFAGVLATIMGLYGAIF) traverse the membrane as a helical segment. At 228–252 (RLVQASGQKAPRPAARRKARRLLKT) the chain is on the cytoplasmic side. Residues 253 to 273 (VLMILLAFLVCWGPLFGLLLA) traverse the membrane as a helical segment. Over 274–288 (DVFGSNLWAQEYLRG) the chain is Extracellular. A helical membrane pass occupies residues 289-309 (MDWILALAVLNSAVNPIIYSF). The Cytoplasmic segment spans residues 310-384 (RSREVCRAVL…LSSISSVRSI (75 aa)). Residue Cys-323 is the site of S-palmitoyl cysteine attachment.

The protein belongs to the G-protein coupled receptor 1 family. As to expression, specifically expressed in fetal and adult lymphoid and hematopoietic tissue as well as in lung. Considerable level of expression in adult and fetal spleen as well as adult peripheral leukocytes and lung. Lower expression in adult thymus, lymph node, bone marrow, and appendix as well as in fetal liver, thymus, and lung.

The protein resides in the cell membrane. Receptor for the lysosphingolipid sphingosine 1-phosphate (S1P). S1P is a bioactive lysophospholipid that elicits diverse physiological effect on most types of cells and tissues. May be involved in cell migration processes that are specific for lymphocytes. In Homo sapiens (Human), this protein is Sphingosine 1-phosphate receptor 4 (S1PR4).